The chain runs to 791 residues: Primase D5 (791 aa).

Asp-174 is a catalytic residue. The primase stretch occupies residues 346 to 471 (SDRGEYLVWL…ELMSILDDIQ (126 aa)). The SF3 helicase domain maps to 479–641 (ENRELYEQIL…FTNTKKKVHN (163 aa)). ATP is bound at residue 505-512 (GETATGKS).

This sequence belongs to the poxviridae D5 family. Interacts with A20.

Its function is as follows. Primase which may have roles in initiation of DNA replication or lagging-strand synthesis. The protein is Primase D5 of Fowlpox virus (strain NVSL) (FPV).